The primary structure comprises 315 residues: B3 domain-containing protein At1g05920 (315 aa).

The interval 24 to 129 (MISRDNQKKT…PQVASVPKSV (106 aa)) is disordered. Basic and acidic residues-rich tracts occupy residues 39 to 51 (VREE…EEMI), 66 to 83 (KEGK…DNRT), and 100 to 114 (FDHV…HAYL). A DNA-binding region (TF-B3) is located at residues 204-306 (INTVIQNDFL…ILCFALVPPT (103 aa)).

The protein resides in the nucleus. The polypeptide is B3 domain-containing protein At1g05920 (Arabidopsis thaliana (Mouse-ear cress)).